Consider the following 602-residue polypeptide: NADH-quinone oxidoreductase subunit C/D (602 aa).

An NADH dehydrogenase I subunit C region spans residues 1–192 (MVNNMTDLTA…DPFELTKAKQ (192 aa)). An NADH dehydrogenase I subunit D region spans residues 216–602 (DFMFLNLGPN…IDFVMSDVDR (387 aa)).

In the N-terminal section; belongs to the complex I 30 kDa subunit family. It in the C-terminal section; belongs to the complex I 49 kDa subunit family. In terms of assembly, NDH-1 is composed of 13 different subunits. Subunits NuoB, CD, E, F, and G constitute the peripheral sector of the complex.

Its subcellular location is the cell inner membrane. The enzyme catalyses a quinone + NADH + 5 H(+)(in) = a quinol + NAD(+) + 4 H(+)(out). In terms of biological role, NDH-1 shuttles electrons from NADH, via FMN and iron-sulfur (Fe-S) centers, to quinones in the respiratory chain. The immediate electron acceptor for the enzyme in this species is believed to be ubiquinone. Couples the redox reaction to proton translocation (for every two electrons transferred, four hydrogen ions are translocated across the cytoplasmic membrane), and thus conserves the redox energy in a proton gradient. The protein is NADH-quinone oxidoreductase subunit C/D of Klebsiella pneumoniae (strain 342).